The following is a 224-amino-acid chain: Jacalin-related lectin 24 (224 aa).

One can recognise a Jacalin-type lectin domain in the interval 8–160 (MFKVGPIGSK…LTSIGIYVYP (153 aa)).

This sequence belongs to the jacalin lectin family.

This Arabidopsis thaliana (Mouse-ear cress) protein is Jacalin-related lectin 24 (JAL24).